Reading from the N-terminus, the 299-residue chain is GTPase Era (299 aa).

An Era-type G domain is found at 5–175 (RSGFVCFVGR…TDVLAGKLPP (171 aa)). Positions 13–20 (GRPNTGKS) are G1. 13–20 (GRPNTGKS) is a GTP binding site. Residues 39 to 43 (QTTRH) are G2. Residues 60–63 (DTPG) are G3. Residues 60-64 (DTPGL) and 124-127 (TKID) each bind GTP. The G4 stretch occupies residues 124-127 (TKID). Residues 154 to 156 (VSA) are G5. Positions 206–285 (VRDELPHSLA…YLDLRVKIAK (80 aa)) constitute a KH type-2 domain.

This sequence belongs to the TRAFAC class TrmE-Era-EngA-EngB-Septin-like GTPase superfamily. Era GTPase family. As to quaternary structure, monomer.

It localises to the cell envelope. Its subcellular location is the secreted. The protein resides in the cell wall. In terms of biological role, exhibits GTPase activity. Binds RNA but is probably not involved in ribosome assembly in mycobacteria. The sequence is that of GTPase Era from Mycobacterium sp. (strain JLS).